Consider the following 403-residue polypeptide: Pantothenate kinase (403 aa).

Phosphoserine occurs at positions 80, 82, and 84.

Belongs to the type II pantothenate kinase family.

The protein localises to the cytoplasm. It is found in the nucleus. It catalyses the reaction (R)-pantothenate + ATP = (R)-4'-phosphopantothenate + ADP + H(+). It participates in cofactor biosynthesis; coenzyme A biosynthesis; CoA from (R)-pantothenate: step 1/5. Its activity is regulated as follows. Regulated by feedback inhibition by malonyl-CoA. In terms of biological role, plays a role in the physiological regulation of the intracellular CoA concentration. In Schizosaccharomyces pombe (strain 972 / ATCC 24843) (Fission yeast), this protein is Pantothenate kinase.